The sequence spans 291 residues: Phosphoribosylaminoimidazole-succinocarboxamide synthase (291 aa).

It belongs to the SAICAR synthetase family.

The catalysed reaction is 5-amino-1-(5-phospho-D-ribosyl)imidazole-4-carboxylate + L-aspartate + ATP = (2S)-2-[5-amino-1-(5-phospho-beta-D-ribosyl)imidazole-4-carboxamido]succinate + ADP + phosphate + 2 H(+). The protein operates within purine metabolism; IMP biosynthesis via de novo pathway; 5-amino-1-(5-phospho-D-ribosyl)imidazole-4-carboxamide from 5-amino-1-(5-phospho-D-ribosyl)imidazole-4-carboxylate: step 1/2. The sequence is that of Phosphoribosylaminoimidazole-succinocarboxamide synthase (ADE1) from Candida albicans (Yeast).